We begin with the raw amino-acid sequence, 80 residues long: Probable antimicrobial peptide clone Con10 (80 aa).

An N-terminal signal peptide occupies residues 1-24; it reads MQYKTKTFLVIFLAYLVVTNEAEA. Residues 56-80 constitute a propeptide that is removed on maturation; sequence EIEDFFDPYQRELDLELERLLSQLQ.

The protein belongs to the non-disulfide-bridged peptide (NDBP) superfamily. Medium-length antimicrobial peptide (group 3) family. As to expression, expressed by the venom gland.

The protein localises to the secreted. Its subcellular location is the target cell membrane. In terms of biological role, antimicrobial peptide. Has antifungal activity against all strains tested (MIC=12.5-200 uM). May act by disrupting the integrity of the bacterial cell membrane. This is Probable antimicrobial peptide clone Con10 from Opisthacanthus cayaporum (South American scorpion).